Consider the following 199-residue polypeptide: Imidazoleglycerol-phosphate dehydratase (199 aa).

Belongs to the imidazoleglycerol-phosphate dehydratase family.

The protein resides in the cytoplasm. The enzyme catalyses D-erythro-1-(imidazol-4-yl)glycerol 3-phosphate = 3-(imidazol-4-yl)-2-oxopropyl phosphate + H2O. It functions in the pathway amino-acid biosynthesis; L-histidine biosynthesis; L-histidine from 5-phospho-alpha-D-ribose 1-diphosphate: step 6/9. This Roseiflexus sp. (strain RS-1) protein is Imidazoleglycerol-phosphate dehydratase.